Here is a 1122-residue protein sequence, read N- to C-terminus: Midnolin homolog (1122 aa).

The Ubiquitin-like domain occupies 69–143 (INLNISTTTG…IILIPNVETG (75 aa)). The required for interaction with Pc stretch occupies residues 210–300 (GGASGSSINA…SGQRSSGRIG (91 aa)). Disordered regions lie at residues 257–399 (VGGS…STLN), 596–630 (KHRH…HFFN), 645–677 (FATS…GAGA), 746–775 (GVVS…KSGS), 840–876 (APTT…RSKM), 886–905 (KCNS…ASGS), 922–955 (AATK…NGCT), and 1067–1122 (AAPA…DTAA). Residues 266–298 (SGTSSSSSSTSSSSSSSSSSSRTRSSGQRSSGR) show a composition bias toward low complexity. 2 stretches are compositionally biased toward basic residues: residues 300–310 (GHGHVHSHQHP) and 321–352 (SHGH…HHHN). A compositionally biased stretch (low complexity) spans 375–397 (PSSSGASGSAPATGTGQSQSSST). Residues 596 to 610 (KHRHYHGQGHGHGHG) show a composition bias toward basic residues. 6 stretches are compositionally biased toward low complexity: residues 612-627 (GHSS…SSSH), 648-663 (SSSS…SSSP), 746-766 (GVVS…AASG), 856-867 (SGSSSTTSSGSG), 889-903 (SRAQ…TLAS), and 922-936 (AATK…SSHS). Composition is skewed to polar residues over residues 937–954 (CCQT…SNGC) and 1071–1085 (NSIT…VNGN). Residues 1086–1107 (TSTAPATAATSAAAAPTAAPPS) show a composition bias toward low complexity.

In terms of assembly, interacts with PRC1 complex member polycomb protein Pc; the interaction targets Pc for ubiquitin-independent proteasomal degradation. Does not interact with PRC1 members Ph, Psc or Sce so does not appear to be a member of the PRC1 complex. Interacts with 26S proteasome regulatory subunit Rpn10.

Its subcellular location is the nucleus. Facilitates ubiquitin-independent proteasomal degradation of polycomb protein Pc by interacting directly with the proteasome and recruiting Pc to it. The polypeptide is Midnolin homolog (Drosophila melanogaster (Fruit fly)).